We begin with the raw amino-acid sequence, 521 residues long: DEAD-box ATP-dependent RNA helicase 1 (521 aa).

The interval 1–20 (MVVAMATKEEEGGPSSRVPH) is disordered. The short motif at 36–65 (CPVAHLPRLDPRLVKPLQRMGIESFFPVQV) is the Q motif element. A Helicase ATP-binding domain is found at 72 to 302 (IGPGAFERDI…QLELQHPLLL (231 aa)). Position 85–92 (85–92 (SPTGSGKT)) interacts with ATP. The short motif at 213 to 216 (DETD) is the DEAD box element. Residues 330 to 480 (SLIVLLQELR…SLPEESVETL (151 aa)) form the Helicase C-terminal domain. The span at 495-507 (LESEATKKSKSGD) shows a compositional bias: basic and acidic residues. A disordered region spans residues 495–521 (LESEATKKSKSGDKAPNASKRKRTINT).

This sequence belongs to the DEAD box helicase family. DDX51/DBP6 subfamily.

The enzyme catalyses ATP + H2O = ADP + phosphate + H(+). The polypeptide is DEAD-box ATP-dependent RNA helicase 1 (Oryza sativa subsp. japonica (Rice)).